A 663-amino-acid chain; its full sequence is MIDKRDFKAFKLVSKYDPSGDQPQAIEALVDNIEGGEKAQILLGATGTGKTYTMSQVISKVNKPTLVIAHNKTLAGQLYGEFKEFFPENAVEYFVSYYDYYQPEAYVPSSDTYIEKDSSVNDEIDKLRHSATSSLLERNDVIVVASVSCIYGLGSPKEYADSAVSLRPGQEISRDQLLNALVDIQFERNDIDFQRGRFRVRGDVVEVFPASRDEHAFRIEFFGDEIDRIREIESLTGKVLGDADHLVLFPATHFVTNDEHMEQSISKIQAELADQLKLFEAEGKLLEAQRLRQRTEYDIEMLREMGYTNGVENYSRHMDGRSAGEPPYTLLDFFPEDFLIMIDESHMTMGQIKGMYNGDKARKQMLVDYGFRLPSALDNRPLRREEFESHVHQIVYVSATPGDYEMEQTDTIVEQIIRPTGLLDPEVEVRPSMGQMDDLLGEINLRIERGERTFITTLTKKMAEDLTDYLKEMGVKVKYMHSDIKTLERTEIIRDLRLGVFDVLIGINLLREGIDVPEVSLVAILDADKEGFLRNERGLIQTIGRAARNADGHVIMYADRMTDSMQRAIDETARRRAIQMAYNEEHGIIPQTIKKDIRDLISISRAVEAKATEAETNYESMTRSERQEAIKQLQKNMQEAAELLDFELAAQLRDLILELKAMD.

The region spanning 31-271 is the Helicase ATP-binding domain; it reads DNIEGGEKAQ…EQSISKIQAE (241 aa). An ATP-binding site is contributed by 44 to 51; sequence GATGTGKT. Residues 97–120 carry the Beta-hairpin motif; the sequence is YYDYYQPEAYVPSSDTYIEKDSSV. The Helicase C-terminal domain occupies 435-601; sequence QMDDLLGEIN…TIKKDIRDLI (167 aa). Residues 627–662 form the UVR domain; sequence QEAIKQLQKNMQEAAELLDFELAAQLRDLILELKAM.

Belongs to the UvrB family. In terms of assembly, forms a heterotetramer with UvrA during the search for lesions. Interacts with UvrC in an incision complex.

The protein localises to the cytoplasm. The UvrABC repair system catalyzes the recognition and processing of DNA lesions. A damage recognition complex composed of 2 UvrA and 2 UvrB subunits scans DNA for abnormalities. Upon binding of the UvrA(2)B(2) complex to a putative damaged site, the DNA wraps around one UvrB monomer. DNA wrap is dependent on ATP binding by UvrB and probably causes local melting of the DNA helix, facilitating insertion of UvrB beta-hairpin between the DNA strands. Then UvrB probes one DNA strand for the presence of a lesion. If a lesion is found the UvrA subunits dissociate and the UvrB-DNA preincision complex is formed. This complex is subsequently bound by UvrC and the second UvrB is released. If no lesion is found, the DNA wraps around the other UvrB subunit that will check the other stand for damage. This Streptococcus equi subsp. zooepidemicus (strain H70) protein is UvrABC system protein B.